Here is a 155-residue protein sequence, read N- to C-terminus: MSVCAVLLLCVAGLLCLSSACYIQNCPRGGKRALLEPVSRQCLACGPGDKGRCLGPSICCGEEIGCLVGSPWMARCQEEEYLPSPCQTAGKLCGSDAGPCAAPGVCCGTEGCKLDPNCSEDSESEEPADQNTLGASPGELLLRLLHPNNRKHNQY.

The signal sequence occupies residues 1–20 (MSVCAVLLLCVAGLLCLSSA). An intrachain disulfide couples cysteine 21 to cysteine 26. The residue at position 29 (glycine 29) is a Glycine amide. Disulfide bonds link cysteine 42-cysteine 86, cysteine 45-cysteine 59, cysteine 53-cysteine 76, cysteine 60-cysteine 66, cysteine 93-cysteine 106, cysteine 100-cysteine 118, and cysteine 107-cysteine 112. Residues 119 to 128 (SEDSESEEPA) are compositionally biased toward acidic residues. The disordered stretch occupies residues 119-139 (SEDSESEEPADQNTLGASPGE).

It belongs to the vasopressin/oxytocin family.

It is found in the secreted. Functionally, vasotocin is an antidiuretic hormone. This is Vasotocin-neurophysin VT 2 from Catostomus commersonii (White sucker).